Here is a 453-residue protein sequence, read N- to C-terminus: Chromosomal replication initiator protein DnaA (453 aa).

The interval 1–74 is domain I, interacts with DnaA modulators; that stretch reads MKEKQFWNRI…GFEIYDAEIT (74 aa). Residues 74–113 form a domain II region; it reads TPHYIFTKPQDTTSSQVEEATNLTLYDYSPKLVSIPYSDT. The domain III, AAA+ region stretch occupies residues 114-331; that stretch reads GLKEKYTFDN…GAINDITLIA (218 aa). Glycine 158, glycine 160, lysine 161, and threonine 162 together coordinate ATP. A domain IV, binds dsDNA region spans residues 332-453; it reads RVKKIKDITI…EIESIKKKIK (122 aa).

The protein belongs to the DnaA family. Oligomerizes as a right-handed, spiral filament on DNA at oriC.

Its subcellular location is the cytoplasm. In terms of biological role, plays an essential role in the initiation and regulation of chromosomal replication. ATP-DnaA binds to the origin of replication (oriC) to initiate formation of the DNA replication initiation complex once per cell cycle. Binds the DnaA box (a 9 base pair repeat at the origin) and separates the double-stranded (ds)DNA. Forms a right-handed helical filament on oriC DNA; dsDNA binds to the exterior of the filament while single-stranded (ss)DNA is stabiized in the filament's interior. The ATP-DnaA-oriC complex binds and stabilizes one strand of the AT-rich DNA unwinding element (DUE), permitting loading of DNA polymerase. After initiation quickly degrades to an ADP-DnaA complex that is not apt for DNA replication. Binds acidic phospholipids. This is Chromosomal replication initiator protein DnaA from Streptococcus pneumoniae (strain P1031).